The following is a 328-amino-acid chain: Palmitoyltransferase ZDHHC15A (328 aa).

Over 1–14 (MLLPACLRRCARLL) the chain is Cytoplasmic. A helical transmembrane segment spans residues 15-35 (FWIPVLVVIVVVMWSYYAYVV). Residues 36–48 (HFCWILLSSATQR) lie on the Lumenal side of the membrane. The chain crosses the membrane as a helical span at residues 49-69 (VVFLCLFHLCFGMFSWSFWKA). At 70–166 (VSTPPSSPSV…NNCMGFSNYK (97 aa)) the chain is on the cytoplasmic side. Residues 123 to 173 (RFCHHCQLIKPDRCHHCSVCQTCVLKMDHHCLWLNNCMGFSNYKFFMLFLL) enclose the DHHC domain. Positions 125 and 128 each coordinate Zn(2+). A substrate-binding site is contributed by lysine 132. The Zn(2+) site is built by histidine 138, cysteine 139, cysteine 142, cysteine 145, and histidine 152. Catalysis depends on cysteine 153, which acts as the S-palmitoyl cysteine intermediate. Cysteine 159 contacts Zn(2+). A helical membrane pass occupies residues 167–187 (FFMLFLLYSLLYCLLIVSTVT). Residues 188 to 206 (PTVIQLWRGRLFDSCVKLH) are Lumenal-facing. A helical transmembrane segment spans residues 207-227 (VLFLTLVSAIFAITLCFLLIF). Topologically, residues 228–328 (HIWLLTSNKT…KEAAVTIAVD (101 aa)) are cytoplasmic.

Belongs to the DHHC palmitoyltransferase family. Autopalmitoylated (in vitro).

The protein resides in the golgi apparatus membrane. The protein localises to the postsynaptic density. The catalysed reaction is L-cysteinyl-[protein] + hexadecanoyl-CoA = S-hexadecanoyl-L-cysteinyl-[protein] + CoA. It catalyses the reaction L-cysteinyl-[protein] + tetradecanoyl-CoA = S-tetradecanoyl-L-cysteinyl-[protein] + CoA. It carries out the reaction L-cysteinyl-[protein] + octadecanoyl-CoA = S-octadecanoyl-L-cysteinyl-[protein] + CoA. In terms of biological role, palmitoyltransferase that catalyzes the addition of palmitate onto various protein substrates. Has no stringent fatty acid selectivity and in addition to palmitate can also transfer onto target proteins myristate from tetradecanoyl-CoA and stearate from octadecanoyl-CoA. May thereby regulate target proteins association and localization to membranes. The protein is Palmitoyltransferase ZDHHC15A (zdhhc15a) of Danio rerio (Zebrafish).